We begin with the raw amino-acid sequence, 336 residues long: Flagellar filament 41 kDa core protein (336 aa).

The tract at residues 208 to 236 (AAPVQEGVQQEGAQQPAPATAPSQGGVNS) is disordered. The segment covering 210 to 233 (PVQEGVQQEGAQQPAPATAPSQGG) has biased composition (low complexity).

It belongs to the bacterial flagellin family. The flagellum consists of an outer layer composed of repeating units of FlaA around a core that contains several antigenically related polypeptides.

It localises to the periplasmic flagellum. The protein localises to the periplasm. Its function is as follows. Component of the core of the flagella. The polypeptide is Flagellar filament 41 kDa core protein (fla) (Borreliella burgdorferi (strain ATCC 35210 / DSM 4680 / CIP 102532 / B31) (Borrelia burgdorferi)).